A 601-amino-acid polypeptide reads, in one-letter code: Jacalin-related lectin 3 (601 aa).

3 Jacalin-type lectin domains span residues 13–155 (PASL…HTQP), 240–382 (AKTY…HVME), and 438–583 (PSGP…HMQH).

This sequence belongs to the jacalin lectin family.

The polypeptide is Jacalin-related lectin 3 (JAL3) (Arabidopsis thaliana (Mouse-ear cress)).